The chain runs to 327 residues: tRNA dimethylallyltransferase (327 aa).

14–21 (GPTASGKT) contacts ATP. Substrate is bound at residue 16-21 (TASGKT). 2 interaction with substrate tRNA regions span residues 39-42 (DSAL) and 163-167 (QRIQR).

The protein belongs to the IPP transferase family. Monomer. Requires Mg(2+) as cofactor.

The catalysed reaction is adenosine(37) in tRNA + dimethylallyl diphosphate = N(6)-dimethylallyladenosine(37) in tRNA + diphosphate. Functionally, catalyzes the transfer of a dimethylallyl group onto the adenine at position 37 in tRNAs that read codons beginning with uridine, leading to the formation of N6-(dimethylallyl)adenosine (i(6)A). This Xanthomonas axonopodis pv. citri (strain 306) protein is tRNA dimethylallyltransferase.